A 184-amino-acid chain; its full sequence is Oligoribonuclease (184 aa).

One can recognise an Exonuclease domain in the interval 8–171 (LIWIDLEMTG…DDIRESIAEL (164 aa)). Tyrosine 129 is a catalytic residue.

It belongs to the oligoribonuclease family.

The protein localises to the cytoplasm. Functionally, 3'-to-5' exoribonuclease specific for small oligoribonucleotides. This Pasteurella multocida (strain Pm70) protein is Oligoribonuclease.